The primary structure comprises 325 residues: Glutarate 2-hydroxylase (325 aa).

Histidine 160, aspartate 162, and histidine 292 together coordinate Fe cation.

The protein belongs to the glutarate hydroxylase family. Homotetramer. Fe(2+) is required as a cofactor.

The catalysed reaction is glutarate + 2-oxoglutarate + O2 = (S)-2-hydroxyglutarate + succinate + CO2. The protein operates within amino-acid degradation. In terms of biological role, acts as an alpha-ketoglutarate-dependent dioxygenase catalyzing hydroxylation of glutarate (GA) to L-2-hydroxyglutarate (L2HG). Functions in a L-lysine degradation pathway that proceeds via cadaverine, glutarate and L-2-hydroxyglutarate. The chain is Glutarate 2-hydroxylase from Pseudomonas putida (strain GB-1).